Consider the following 313-residue polypeptide: tRNA dimethylallyltransferase (313 aa).

10 to 17 (GPTAVGKT) is a binding site for ATP. 12–17 (TAVGKT) contacts substrate. The tract at residues 35–38 (DSMQ) is interaction with substrate tRNA.

This sequence belongs to the IPP transferase family. Monomer. The cofactor is Mg(2+).

The catalysed reaction is adenosine(37) in tRNA + dimethylallyl diphosphate = N(6)-dimethylallyladenosine(37) in tRNA + diphosphate. Its function is as follows. Catalyzes the transfer of a dimethylallyl group onto the adenine at position 37 in tRNAs that read codons beginning with uridine, leading to the formation of N6-(dimethylallyl)adenosine (i(6)A). This Alkaliphilus oremlandii (strain OhILAs) (Clostridium oremlandii (strain OhILAs)) protein is tRNA dimethylallyltransferase.